A 39-amino-acid polypeptide reads, in one-letter code: Photosystem II reaction center protein X (39 aa).

Residues 10–30 (SSLVWAAVIVVIPAAVALVLI) traverse the membrane as a helical segment.

Belongs to the PsbX family. Type 1 subfamily. As to quaternary structure, PSII is composed of 1 copy each of membrane proteins PsbA, PsbB, PsbC, PsbD, PsbE, PsbF, PsbH, PsbI, PsbJ, PsbK, PsbL, PsbM, PsbT, PsbX, PsbY, Psb30/Ycf12, peripheral proteins PsbO, CyanoQ (PsbQ), PsbU, PsbV and a large number of cofactors. It forms dimeric complexes.

It localises to the cellular thylakoid membrane. Involved in the binding and/or turnover of quinones at the Q(B) site of photosystem II (PSII). PSII is a light-driven water plastoquinone oxidoreductase, using light energy to abstract electrons from H(2)O, generating a proton gradient subsequently used for ATP formation. This Prochlorococcus marinus (strain MIT 9303) protein is Photosystem II reaction center protein X.